The following is a 422-amino-acid chain: DNA-directed RNA polymerase III subunit RPC4 (422 aa).

Disordered stretches follow at residues 1–80 (MSSN…GQQR), 115–190 (KSEG…DDEE), 219–244 (IQEA…GTGL), and 318–350 (RPAV…TKDA). The Nuclear localization signal motif lies at 25-29 (KPSLK). Residues 28–37 (LKFKPKAVAR) are compositionally biased toward basic residues. Positions 38 to 64 (KSKEEREAAASKVKLEEESKRGNDKKH) are enriched in basic and acidic residues. 2 positions are modified to phosphoserine: serine 137 and serine 138. The span at 138 to 148 (SENEAEDDDNE) shows a compositional bias: acidic residues. The segment covering 160-170 (MGKEFEARNLI) has biased composition (basic and acidic residues). Residues serine 178, serine 182, and serine 224 each carry the phosphoserine modification. Over residues 219–229 (IQEALSEKPTR) the composition is skewed to basic and acidic residues. A phosphothreonine mark is found at threonine 228 and threonine 232.

Belongs to the eukaryotic RPC4/POLR3D RNA polymerase subunit family. In terms of assembly, component of the RNA polymerase III (Pol III) complex consisting of 17 subunits. Interacts with RPC37/RPC5. RPC53/RPC4, RPC37/RPC5 and RPC11/RPC10 probably form a Pol III subcomplex.

It is found in the nucleus. Its function is as follows. DNA-dependent RNA polymerase catalyzes the transcription of DNA into RNA using the four ribonucleoside triphosphates as substrates. Specific peripheric component of RNA polymerase III which synthesizes small RNAs, such as 5S rRNA and tRNAs. Essential for tRNA synthesis. The RPC53/RPC4-RPC37/RPC5 subcomplex is required for terminator recognition and reinitiation. The chain is DNA-directed RNA polymerase III subunit RPC4 (RPC53) from Saccharomyces cerevisiae (strain ATCC 204508 / S288c) (Baker's yeast).